A 920-amino-acid chain; its full sequence is Protein O-mannosyl-transferase TMTC3 (920 aa).

Over 1 to 14 (MLEGKMADINFKEV) the chain is Cytoplasmic. A helical transmembrane segment spans residues 15 to 35 (TLIVSVVAACYWNSLFCGFVF). Over 36-94 (DDVSAILDNKDLHPSTPLKTLFQNDFWGTPMSEERSHKSYRPLTVLTFRLNYLLSELKP) the chain is Extracellular. A helical transmembrane segment spans residues 95–115 (MSYHLLNTVFHAVVSVIFLKV). Residues 116-125 (CRLFLDKRSS) lie on the Cytoplasmic side of the membrane. Helical transmembrane passes span 126 to 144 (MIAALLFAVHPIHTEAVTG) and 145 to 163 (VVGRAELLSSVFFLAAFLS). The Cytoplasmic segment spans residues 164–171 (YTKSKGPD). The helical transmembrane segment at 172 to 192 (NSIVWTPIVLTVFLVAVATLC) threads the bilayer. Over 193-198 (KEQGIT) the chain is Extracellular. A helical membrane pass occupies residues 199–219 (VVGICCVYEVFVAQGYTLPML). Topologically, residues 220–236 (CTVAGQFLRGKGSIPLS) are cytoplasmic. A helical transmembrane segment spans residues 237 to 257 (MLQTLVKLIVLMLSTLLLVVV). Topologically, residues 258 to 325 (RVQVIQSQLP…LIESFLDVRN (68 aa)) are extracellular. Residues 326–346 (LATFAFFCFLGALGIFSLRYP) traverse the membrane as a helical segment. Residues 347–358 (GDSSKTVLMALC) lie on the Cytoplasmic side of the membrane. The helical transmembrane segment at 359 to 379 (LMALPFIPASNLFFPVGFVVA) threads the bilayer. The Extracellular portion of the chain corresponds to 380-381 (ER). A helical transmembrane segment spans residues 382 to 402 (VLYVPSMGFCILVAHGWQKIS). The Cytoplasmic portion of the chain corresponds to 403-409 (NKSVLKK). The chain crosses the membrane as a helical span at residues 410–428 (LSWVCLSMVILTHALKTLH). Residues 429–920 (RNWDWESEYT…EEIERILNGE (492 aa)) lie on the Extracellular side of the membrane. TPR repeat units follow at residues 451–484 (AKLWNNVGHALENEKNFEKALKYFLQATHVQPDD), 485–518 (IGAHMNVGRTYKNLNRSREAEASYMLAKSLMPQI), 534–567 (NVYINLANLIRANESRLEEADQLYRQAISMRPDF), 568–601 (KQAYISRGELLLKMNKPLKAKEAYLKALELDRNN), 602–635 (ADLWYNLAIVYIELKEPNEALKNFNRALELNPKH), 673–706 (ANGYFNLGMLAMDDKKDSEAESWMKKAIKLQPDF), 707–740 (RSALFNLALLYSQTAKELKALPILEELLKYYPDH), 742–775 (KGLILKGDILMNQKKDIPGAKKCFEKILEMDPSN), and 776–809 (VQGKHNLCVVYFEEKELLKAERCLVETLALAPHE). A glycan (N-linked (GlcNAc...) asparagine) is linked at Asn499. The residue at position 508 (Tyr508) is a Phosphotyrosine. Asn546 is a glycosylation site (N-linked (GlcNAc...) asparagine). The tract at residues 829 to 897 (VEQPLAPADK…APHKTTKDIK (69 aa)) is disordered. Residues 840–858 (PGTEEREEIPSEDVKEISS) show a composition bias toward basic and acidic residues. The segment covering 867-880 (KTNNNRNSKSNKQS) has biased composition (low complexity). A compositionally biased stretch (basic and acidic residues) spans 887–897 (DAPHKTTKDIK).

It belongs to the TMTC family.

It localises to the membrane. Its subcellular location is the endoplasmic reticulum. It catalyses the reaction a di-trans,poly-cis-dolichyl beta-D-mannosyl phosphate + L-seryl-[protein] = 3-O-(alpha-D-mannosyl)-L-seryl-[protein] + a di-trans,poly-cis-dolichyl phosphate + H(+). It carries out the reaction a di-trans,poly-cis-dolichyl beta-D-mannosyl phosphate + L-threonyl-[protein] = 3-O-(alpha-D-mannosyl)-L-threonyl-[protein] + a di-trans,poly-cis-dolichyl phosphate + H(+). The protein operates within protein modification; protein glycosylation. In terms of biological role, transfers mannosyl residues to the hydroxyl group of serine or threonine residues. The 4 members of the TMTC family are O-mannosyl-transferases dedicated primarily to the cadherin superfamily, each member seems to have a distinct role in decorating the cadherin domains with O-linked mannose glycans at specific regions. Also acts as O-mannosyl-transferase on other proteins such as PDIA3. Involved in the positive regulation of proteasomal protein degradation in the endoplasmic reticulum (ER), and the control of ER stress response. The polypeptide is Protein O-mannosyl-transferase TMTC3 (Mus musculus (Mouse)).